Consider the following 2164-residue polypeptide: MGAQVSRQNVGTHSTQNSVSNGSSLNYFNINYFKDAASSGASRLDFSQDPSKFTDPVKDVLEKGIPTLQSPTVEACGYSDRLIQITRGDSTITSQDTANAVVAYGVWPSYLTPDDATAIDKPTQPDTSSNRFYTLDSRSWTSASSGWWWKLPDALKNMGIFGENMFYHFLGRSGYTIHVQCNSSKFHQGLLIVAAIPEHQLASATSGNVSVGYNHTHPGEQGREVVPSRTSSDNKRPSDDSWLNFDGTLLGNLPIYPHQYINLRTNNSATLILPYVNAVPMDSMLRHNNWSLVIIPICPLQVQPGGTQSIPITVSISPMFSEFSGPRSKVVFSTTQGLPVMLTPGSGQFLTTDDTQSPSAFPYFHPTKEIFIPGQVRNLIEMCQVDTLIPVNNTQENVRSVNMYTVDLRTQVDLAKEVFSIPVDIASQPLATTLIGELASYYTHWTGSLRFSFMFCGSASSTLKLLIAYTPPGVGKPKSRREAMLGTHLVWDVGLQSTASLVVPWVSASHFRFTTPDTYSSAGYITCWYQTNFVVPDSTPDNAKMVCMVSACKDFCLRLARDTNLHTQEGVLTQNPVENYIDSVLNEVLVVPNIQPSTSVSSHAAPALDAAETGHTSSVQPEDMIETRYVITDQTRDETSIESFLGRSGCIAMIEFNTSSDKTEHDKIGKGFKTWKVSLQEMAQIRRKYELFTYTRFDSEITIVTAAAAQGNDSGHIVLQFMYVPPGAPVPEKRDDYTWQSGTNASVFWQEGQPYPRFTIPFMSIASAYYMFYDGYDGDSAASKYGSVVTNDMGTICVRIVTSNQKHDSNIVCRIYHKAKHIKAWCPRPPRAVAYQHTHSTNYIPSNGEATTQIKTRPDVFTVTNVGPSSMFVHVGNLIYRNLHLFNSDLDDSILVSYSSDLIIYRTNTEGNDVIPNCDCTECTYYCHHKDRYFPIRVTAHDWYEIQESEYYPKHIQYNLLIGEGPCEPGDCGGKLLCKHGVIGMITAGGEGHVAFIDLRKFQCAEEQGLSDYVEHLGQVFGVGFVDSIKQQVNFINPTSKIGSKVIKWLLRIVSAMIIMVRNSSDPQTVIATLTLLGCSGSPWRFLKEKLCAWLQLSYVHKQSDSWLKKFTEACNAARGLEWIGQKISKFIDWIKSMLPQAQLKIDYLTKLKQLNLLEKQIETIRLAPASVQEKIFIEINTLHDLSLKFLPLYASEARRIKNLYIKCSNVIKGGKRNEPVAVLIHGSPGTGKSLATSVLARMLTVETDIYSLPPDPKYFDGYDQQSVVIMDDIMQNPSGEDMTLFCQMVSSVPFIPPMADLPDKGKPFTSKFVLASTNHTLLTPPTVSSLPAMARRFYFDLDIQVKKEYLLDGKLDIAKSFRPCDVNIKIGNAKCCPFICGKAVEFKDRNSCTTLSLSQLYSHIKEEDRRRSSAAQAMEAIFQGIDLQSPPPPAIADLLRSVKTPEIIKYCQDNNWIVPAECSIERDLGIANMTIGIIANVVSIVGVIYIIYKLFCTLQGPYSGEPKPKSRAPERRVVTQGPEEEFGRSLLKHNCCVVTTDKGKFTGLGIYDQVMVLPTHSDPGSEILVDGVKVKVSDSYDLHNHEGVKLEITVVKLIRNEKFKDIRKYLPSREDDYPACNLALLANQDEPTIISVGDAVSYGNILLSGTNTARMIKYHYPTKAGYCGGVLYKVGSILGIHVGGNGRDGFSAMLLKSYFGETQGLITKELPVSVKNLPSVHVSSKTRLQPSVFHDVFPGTKEPAVLSSNDPRLETDFDSALFSKYKGNPACQVTPHMKIAVAHYAAQLSTLDINPQPLSLEESVFGIEGLEALDLNTSAGFPYVSLGIKKKDLIDKKTKDITKLRKAIDEYGIDLPMVTFLKDELRKKEKIKDGKTRVIEANSVNDTVLFRSVFGNLFSAFHKNPGIVTGSAVGCDPEVFWSTIPLMLDGECLMAFDYSNYDGSLHPVWFKCLSMLLEDIGFSSQLINQICNSKHIYKSKYYEVEGGMPSGCAGTSIFNTIINNIIIRTLVLDAYKNIDLDKLKILAYGDDVIFSYNFKLDMAVLAKEGEKYGLTITPADKSDVFQELTYKNVTFLKRGFRADERHSFLIHPTFPVAEIHDSIRWTKNPSCMQEHVLSLCHLMWHNGRHAYQEFIKGIRSVSAGRALYIPAYEVLEHEWYEKF.

Gly2 carries the N-myristoyl glycine; by host lipid modification. Topologically, residues 2 to 1477 (GAQVSRQNVG…DLGIANMTIG (1476 aa)) are cytoplasmic. The tract at residues 208–239 (NVSVGYNHTHPGEQGREVVPSRTSSDNKRPSD) is disordered. The segment at 572-588 (LTQNPVENYIDSVLNEV) is amphipathic alpha-helix. Active-site for protease 2A activity residues include His884 and Asp901. Zn(2+) is bound by residues Cys918 and Cys920. The For protease 2A activity role is filled by Cys972. Zn(2+) contacts are provided by Cys978 and His980. Residues 1104 to 1173 (SDSWLKKFTE…TIRLAPASVQ (70 aa)) form a membrane-binding region. Residues 1104–1237 (SDSWLKKFTE…SPGTGKSLAT (134 aa)) form an oligomerization region. The tract at residues 1125–1129 (GQKIS) is RNA-binding. The SF3 helicase domain occupies 1197–1357 (EARRIKNLYI…KEYLLDGKLD (161 aa)). 1227 to 1234 (GSPGTGKS) serves as a coordination point for ATP. Zn(2+)-binding residues include Cys1365, Cys1376, and Cys1381. The C4-type; degenerate zinc-finger motif lies at 1365-1381 (CDVNIKIGNAKCCPFIC). The tract at residues 1408 to 1415 (EDRRRSSA) is RNA-binding. The tract at residues 1419–1424 (MEAIFQ) is oligomerization. The stretch at 1478–1493 (IIANVVSIVGVIYIIY) is an intramembrane region. The Cytoplasmic segment spans residues 1494-2164 (KLFCTLQGPY…VLEHEWYEKF (671 aa)). The residue at position 1503 (Tyr1503) is an O-(5'-phospho-RNA)-tyrosine. Residues 1522 to 1700 (GPEEEFGRSL…FSAMLLKSYF (179 aa)) enclose the Peptidase C3 domain. Active-site for protease 3C activity residues include His1561, Glu1592, and Cys1668. Positions 1932–2045 (ECLMAFDYSN…SYNFKLDMAV (114 aa)) constitute a RdRp catalytic domain. Mg(2+)-binding residues include Asp1938 and Asp2031.

The protein belongs to the picornaviruses polyprotein family. As to quaternary structure, interacts with capsid protein VP1 and capsid protein VP3 to form heterotrimeric protomers. Interacts with capsid protein VP0, and capsid protein VP3 to form heterotrimeric protomers. Five protomers subsequently associate to form pentamers which serve as building blocks for the capsid. Interacts with capsid protein VP2, capsid protein VP3 and capsid protein VP4 following cleavage of capsid protein VP0. In terms of assembly, interacts with capsid protein VP1 and capsid protein VP3 in the mature capsid. As to quaternary structure, interacts with capsid protein VP0 and capsid protein VP1 to form heterotrimeric protomers. Five protomers subsequently associate to form pentamers which serve as building blocks for the capsid. Interacts with capsid protein VP4 in the mature capsid. Interacts with protein 2C; this interaction may be important for virion morphogenesis. Interacts with capsid protein VP1 and capsid protein VP3. In terms of assembly, homodimer. As to quaternary structure, homohexamer; forms a hexameric ring structure with 6-fold symmetry characteristic of AAA+ ATPases. Interacts (via N-terminus) with host RTN3 (via reticulon domain); this interaction is important for viral replication. Interacts with capsid protein VP3; this interaction may be important for virion morphogenesis. Interacts with protein 3CD. In terms of assembly, homodimer. Interacts with host GBF1. Interacts (via GOLD domain) with host ACBD3 (via GOLD domain); this interaction allows the formation of a viral protein 3A/ACBD3 heterotetramer with a 2:2 stoichiometry, which will stimulate the recruitment of host PI4KB in order to synthesize PI4P at the viral RNA replication sites. As to quaternary structure, interacts with RNA-directed RNA polymerase. Interacts with protein 3AB and with RNA-directed RNA polymerase. In terms of assembly, interacts with Viral protein genome-linked and with protein 3CD. Requires Mg(2+) as cofactor. Post-translationally, specific enzymatic cleavages in vivo by the viral proteases yield processing intermediates and the mature proteins. Myristoylation is required for the formation of pentamers during virus assembly. Further assembly of 12 pentamers and a molecule of genomic RNA generates the provirion. In terms of processing, during virion maturation, immature virions are rendered infectious following cleavage of VP0 into VP4 and VP2. This maturation seems to be an autocatalytic event triggered by the presence of RNA in the capsid and it is followed by a conformational change infectious virion. Post-translationally, myristoylation is required during RNA encapsidation and formation of the mature virus particle. VPg is uridylylated by the polymerase into VPg-pUpU. This acts as a nucleotide-peptide primer for the genomic RNA replication.

Its subcellular location is the virion. The protein resides in the host cytoplasm. It is found in the host cytoplasmic vesicle membrane. The protein localises to the host nucleus. The catalysed reaction is a ribonucleoside 5'-triphosphate + H2O = a ribonucleoside 5'-diphosphate + phosphate + H(+). It carries out the reaction Selective cleavage of Tyr-|-Gly bond in the picornavirus polyprotein.. It catalyses the reaction RNA(n) + a ribonucleoside 5'-triphosphate = RNA(n+1) + diphosphate. The enzyme catalyses Selective cleavage of Gln-|-Gly bond in the poliovirus polyprotein. In other picornavirus reactions Glu may be substituted for Gln, and Ser or Thr for Gly.. With respect to regulation, replication or transcription is subject to high level of random mutations by the nucleotide analog ribavirin. Functionally, forms an icosahedral capsid of pseudo T=3 symmetry with capsid proteins VP2 and VP3. The capsid is 300 Angstroms in diameter, composed of 60 copies of each capsid protein and enclosing the viral positive strand RNA genome. Capsid protein VP1 mainly forms the vertices of the capsid. Capsid protein VP1 interacts with host cell receptor to provide virion attachment to target host cells. This attachment induces virion internalization. Tyrosine kinases are probably involved in the entry process. After binding to its receptor, the capsid undergoes conformational changes. Capsid protein VP1 N-terminus (that contains an amphipathic alpha-helix) and capsid protein VP4 are externalized. Together, they shape a pore in the host membrane through which viral genome is translocated to host cell cytoplasm. In terms of biological role, forms an icosahedral capsid of pseudo T=3 symmetry with capsid proteins VP2 and VP3. The capsid is 300 Angstroms in diameter, composed of 60 copies of each capsid protein and enclosing the viral positive strand RNA genome. Lies on the inner surface of the capsid shell. After binding to the host receptor, the capsid undergoes conformational changes. Capsid protein VP4 is released, Capsid protein VP1 N-terminus is externalized, and together, they shape a pore in the host membrane through which the viral genome is translocated into the host cell cytoplasm. Its function is as follows. Component of immature procapsids, which is cleaved into capsid proteins VP4 and VP2 after maturation. Allows the capsid to remain inactive before the maturation step. Functionally, cysteine protease that cleaves viral polyprotein and specific host proteins. It is responsible for the autocatalytic cleavage between the P1 and P2 regions, which is the first cleavage occurring in the polyprotein. Also cleaves the host translation initiation factor EIF4G1, in order to shut down the capped cellular mRNA translation. Inhibits the host nucleus-cytoplasm protein and RNA trafficking by cleaving host members of the nuclear pores. Counteracts stress granule formation probably by antagonizing its assembly or promoting its dissassembly. In terms of biological role, plays an essential role in the virus replication cycle by acting as a viroporin. Creates a pore in the host endoplasmic reticulum and as a consequence releases Ca2+ in the cytoplasm of infected cell. In turn, high levels of cytoplasmic calcium may trigger membrane trafficking and transport of viral ER-associated proteins to viroplasms, sites of viral genome replication. Induces and associates with structural rearrangements of intracellular membranes. Displays RNA-binding, nucleotide binding and NTPase activities. May play a role in virion morphogenesis and viral RNA encapsidation by interacting with the capsid protein VP3. Its function is as follows. Localizes the viral replication complex to the surface of membranous vesicles. Together with protein 3CD binds the Cis-Active RNA Element (CRE) which is involved in RNA synthesis initiation. Acts as a cofactor to stimulate the activity of 3D polymerase, maybe through a nucleid acid chaperone activity. Functionally, localizes the viral replication complex to the surface of membranous vesicles. It inhibits host cell endoplasmic reticulum-to-Golgi apparatus transport and causes the disassembly of the Golgi complex, possibly through GBF1 interaction. This would result in depletion of MHC, trail receptors and IFN receptors at the host cell surface. Plays an essential role in viral RNA replication by recruiting ACBD3 and PI4KB at the viral replication sites, thereby allowing the formation of the rearranged membranous structures where viral replication takes place. In terms of biological role, acts as a primer for viral RNA replication and remains covalently bound to viral genomic RNA. VPg is uridylylated prior to priming replication into VPg-pUpU. The oriI viral genomic sequence may act as a template for this. The VPg-pUpU is then used as primer on the genomic RNA poly(A) by the RNA-dependent RNA polymerase to replicate the viral genome. During genome replication, the VPg-RNA linkage is removed by the host TDP2, thereby accelerating replication. During the late stage of the replication cycle, host TDP2 is excluded from sites of viral RNA synthesis and encapsidation, allowing for the generation of progeny virions. Involved in the viral replication complex and viral polypeptide maturation. It exhibits protease activity with a specificity and catalytic efficiency that is different from protease 3C. Protein 3CD lacks polymerase activity. Protein 3CD binds to the 5'UTR of the viral genome. Its function is as follows. Replicates the viral genomic RNA on the surface of intracellular membranes. May form linear arrays of subunits that propagate along a strong head-to-tail interaction called interface-I. Covalently attaches UMP to a tyrosine of VPg, which is used to prime RNA synthesis. The positive stranded RNA genome is first replicated at virus induced membranous vesicles, creating a dsRNA genomic replication form. This dsRNA is then used as template to synthesize positive stranded RNA genomes. ss(+)RNA genomes are either translated, replicated or encapsidated. Functionally, major viral protease that mediates proteolytic processing of the polyprotein. Cleaves host EIF5B, contributing to host translation shutoff. Also cleaves host PABPC1, contributing to host translation shutoff. Cleaves host NLRP1, triggers host N-glycine-mediated degradation of the autoinhibitory NLRP1 N-terminal fragment. In Human rhinovirus A serotype 89 (strain 41467-Gallo) (HRV-89), this protein is Genome polyprotein.